The sequence spans 274 residues: Undecaprenyl-diphosphatase (274 aa).

7 helical membrane-spanning segments follow: residues 21–39 (FLPI…LLGF), 44–64 (AQVF…LVYW), 85–105 (FNLA…GKAI), 109–129 (LFTP…ILWA), 185–205 (ATDF…VYSL), 214–234 (VADL…AWLC), and 247–267 (FVPF…TAST).

This sequence belongs to the UppP family.

The protein localises to the cell inner membrane. It carries out the reaction di-trans,octa-cis-undecaprenyl diphosphate + H2O = di-trans,octa-cis-undecaprenyl phosphate + phosphate + H(+). Catalyzes the dephosphorylation of undecaprenyl diphosphate (UPP). Confers resistance to bacitracin. The protein is Undecaprenyl-diphosphatase of Verminephrobacter eiseniae (strain EF01-2).